The primary structure comprises 318 residues: MLHHHCRRNPELQEELQIQAAVAAGDVHTVRKMLEQGYSPNGRDANGWTLLHFSAARGKERCVRVFLEHGADPTVKDLIGGFTALHYAAMHGRARIARLMLESEYRSDIINAKSNDGWTPLHVAAHYGRDSFVRLLLEFKAEVDPLSDKGTTPLQLAIIRERSSCVKILLDHNANIDIQNGFLLRYAVIKSNHSYCRMFLQRGADTNLGRLEDGQTPLHLSALRDDVLCARMLYNYGADTNTRNYEGQTPLAVSISISGSSRPCLDFLQDVTRQPRTLQDLCRIKIRQCIGLQNLKLLDELPIAKVMKDYLKHKFDDI.

ANK repeat units follow at residues 13–42 (QEELQIQAAVAAGDVHTVRKMLEQGYSPNG), 46–75 (NGWTLLHFSAARGKERCVRVFLEHGADPTV), 80–109 (GGFTALHYAAMHGRARIARLMLESEYRSDI), 116–145 (DGWTPLHVAAHYGRDSFVRLLLEFKAEVDP), 149–178 (KGTTPLQLAIIRERSSCVKILLDHNANIDI), 180–208 (NGFLLRYAVIKSNHSYCRMFLQRGADTNL), and 213–242 (DGQTPLHLSALRDDVLCARMLYNYGADTNT). The SOCS box domain maps to 265-318 (LDFLQDVTRQPRTLQDLCRIKIRQCIGLQNLKLLDELPIAKVMKDYLKHKFDDI).

Belongs to the ankyrin SOCS box (ASB) family. In terms of assembly, interacts with CUL5. Interacts with RNF7. Interacts with PSRC1.

It localises to the nucleus. It is found in the cytoplasm. It functions in the pathway protein modification; protein ubiquitination. Its function is as follows. Probable substrate-recognition component of a SCF-like ECS (Elongin-Cullin-SOCS-box protein) E3 ubiquitin-protein ligase complex which mediates the ubiquitination and subsequent proteasomal degradation of target proteins. Plays a role in spindle dynamics and genome integrity by targeting the mitotic progression protein PSRC1 for proteasomal degradation in a cell cycle-dependent manner. Also participates in meiosis by mediating the proper attachment between kinetochores and microtubules. This Mus musculus (Mouse) protein is Ankyrin repeat and SOCS box protein 7 (Asb7).